Here is a 208-residue protein sequence, read N- to C-terminus: Endoplasmic reticulum vesicle protein 25 (208 aa).

An N-terminal signal peptide occupies residues 1-15 (MKFLLLLLLAPFISA). The Lumenal portion of the chain corresponds to 16-177 (LRFDLKAESK…TNESTNERVR (162 aa)). In terms of domain architecture, GOLD spans 28–118 (QMCIRDFVSE…KRAIELDIES (91 aa)). The helical transmembrane segment at 178 to 198 (NFSVLVIIVLTSLGAWQVNYL) threads the bilayer. Residues 199-208 (KNYFKSKHII) lie on the Cytoplasmic side of the membrane.

This sequence belongs to the EMP24/GP25L family.

The protein localises to the endoplasmic reticulum membrane. The protein resides in the golgi apparatus membrane. In terms of biological role, constituent of COPII-coated endoplasmic reticulum-derived transport vesicles. Required for efficient transport of a subset of secretory proteins to the Golgi. Facilitates retrograde transport from the Golgi to the endoplasmic reticulum. This chain is Endoplasmic reticulum vesicle protein 25 (ERV25), found in Candida glabrata (strain ATCC 2001 / BCRC 20586 / JCM 3761 / NBRC 0622 / NRRL Y-65 / CBS 138) (Yeast).